Consider the following 171-residue polypeptide: uncharacterized protein (171 aa).

This is an uncharacterized protein from Orgyia pseudotsugata multicapsid polyhedrosis virus (OpMNPV).